The following is a 217-amino-acid chain: Dephospho-CoA kinase (217 aa).

The 216-residue stretch at 2 to 217 (VIGLTGGIAS…RELARIEEQK (216 aa)) folds into the DPCK domain. 10–15 (ASGKST) provides a ligand contact to ATP.

The protein belongs to the CoaE family.

Its subcellular location is the cytoplasm. It catalyses the reaction 3'-dephospho-CoA + ATP = ADP + CoA + H(+). It participates in cofactor biosynthesis; coenzyme A biosynthesis; CoA from (R)-pantothenate: step 5/5. Catalyzes the phosphorylation of the 3'-hydroxyl group of dephosphocoenzyme A to form coenzyme A. The chain is Dephospho-CoA kinase from Lactococcus lactis subsp. lactis (strain IL1403) (Streptococcus lactis).